Consider the following 153-residue polypeptide: uncharacterized protein (153 aa).

Residues 1–22 (MKMLKKGTAVLFVMIMAVMLVA) form the signal peptide. C23 is lipidated: N-palmitoyl cysteine. The S-diacylglycerol cysteine moiety is linked to residue C23. The disordered stretch occupies residues 117–153 (DMNKIPGMSSNGDTSKGISMEESAKMLESQGYKEVSK). Polar residues predominate over residues 124-133 (MSSNGDTSKG).

The protein to E.coli YehR.

Its subcellular location is the cell membrane. This is an uncharacterized protein from Listeria monocytogenes serovar 1/2a (strain ATCC BAA-679 / EGD-e).